A 156-amino-acid chain; its full sequence is ATP synthase subunit b (156 aa).

A helical membrane pass occupies residues 5 to 27 (ITLIGQMITFAIFVGFTMKFVWP).

The protein belongs to the ATPase B chain family. F-type ATPases have 2 components, F(1) - the catalytic core - and F(0) - the membrane proton channel. F(1) has five subunits: alpha(3), beta(3), gamma(1), delta(1), epsilon(1). F(0) has three main subunits: a(1), b(2) and c(10-14). The alpha and beta chains form an alternating ring which encloses part of the gamma chain. F(1) is attached to F(0) by a central stalk formed by the gamma and epsilon chains, while a peripheral stalk is formed by the delta and b chains.

Its subcellular location is the cell inner membrane. Functionally, f(1)F(0) ATP synthase produces ATP from ADP in the presence of a proton or sodium gradient. F-type ATPases consist of two structural domains, F(1) containing the extramembraneous catalytic core and F(0) containing the membrane proton channel, linked together by a central stalk and a peripheral stalk. During catalysis, ATP synthesis in the catalytic domain of F(1) is coupled via a rotary mechanism of the central stalk subunits to proton translocation. Component of the F(0) channel, it forms part of the peripheral stalk, linking F(1) to F(0). The polypeptide is ATP synthase subunit b (Francisella philomiragia subsp. philomiragia (strain ATCC 25017 / CCUG 19701 / FSC 153 / O#319-036)).